Here is a 166-residue protein sequence, read N- to C-terminus: Ribosome maturation factor RimM (166 aa).

One can recognise a PRC barrel domain in the interval 94–166 (EDEFYITDLN…AILNYKRDEL (73 aa)).

It belongs to the RimM family. Binds ribosomal protein uS19.

The protein localises to the cytoplasm. An accessory protein needed during the final step in the assembly of 30S ribosomal subunit, possibly for assembly of the head region. Essential for efficient processing of 16S rRNA. May be needed both before and after RbfA during the maturation of 16S rRNA. It has affinity for free ribosomal 30S subunits but not for 70S ribosomes. In Rickettsia bellii (strain RML369-C), this protein is Ribosome maturation factor RimM.